A 110-amino-acid chain; its full sequence is UPF0060 membrane protein Pnap_4944 (110 aa).

The next 4 membrane-spanning stretches (helical) occupy residues 8 to 28 (ILFAVTALAEIVGCYLPWLVL), 33 to 53 (SLLLLVPAAMSLGLFAWLLTL), 65 to 85 (YGGMYIAVALGWLRFVDGIAL), and 88 to 108 (WDLSGAAIALVGMAVIVMQPS).

This sequence belongs to the UPF0060 family.

It localises to the cell inner membrane. In Polaromonas naphthalenivorans (strain CJ2), this protein is UPF0060 membrane protein Pnap_4944.